A 271-amino-acid chain; its full sequence is Probable ribosome biogenesis GTPase A (271 aa).

A CP-type G domain is found at 21–175; that stretch reads HDQLKKLASS…LSDTPGVFFK (155 aa). GTP is bound by residues 127 to 132 and Gly-171; that span reads NVGKSS.

Belongs to the TRAFAC class YlqF/YawG GTPase family. MTG1 subfamily.

It is found in the cytoplasm. Required for a late step of 50S ribosomal subunit assembly. Has GTPase activity. Binds to the 23S rRNA. The chain is Probable ribosome biogenesis GTPase A (rbgA) from Mycoplasma pneumoniae (strain ATCC 29342 / M129 / Subtype 1) (Mycoplasmoides pneumoniae).